The following is a 296-amino-acid chain: 3-methyl-2-oxobutanoate hydroxymethyltransferase (296 aa).

Positions 1–33 (MDASDTPTHPAPHPADPAATPYGAPTTPPRPLR) are disordered. The span at 16 to 25 (DPAATPYGAP) shows a compositional bias: low complexity. Positions 77 and 116 each coordinate Mg(2+). Residues 77 to 78 (DS), Asp-116, and Lys-146 each bind 3-methyl-2-oxobutanoate. Glu-148 lines the Mg(2+) pocket. Residue Glu-214 is the Proton acceptor of the active site.

It belongs to the PanB family. Homodecamer; pentamer of dimers. Mg(2+) is required as a cofactor.

The protein localises to the cytoplasm. It catalyses the reaction 3-methyl-2-oxobutanoate + (6R)-5,10-methylene-5,6,7,8-tetrahydrofolate + H2O = 2-dehydropantoate + (6S)-5,6,7,8-tetrahydrofolate. It participates in cofactor biosynthesis; (R)-pantothenate biosynthesis; (R)-pantoate from 3-methyl-2-oxobutanoate: step 1/2. In terms of biological role, catalyzes the reversible reaction in which hydroxymethyl group from 5,10-methylenetetrahydrofolate is transferred onto alpha-ketoisovalerate to form ketopantoate. This chain is 3-methyl-2-oxobutanoate hydroxymethyltransferase, found in Frankia casuarinae (strain DSM 45818 / CECT 9043 / HFP020203 / CcI3).